Consider the following 578-residue polypeptide: NADPH oxidase 4 (578 aa).

At 1-16 the chain is on the cytoplasmic side; sequence MAVSWRSWLANEGVKH. Residues 17–37 form a helical membrane-spanning segment; it reads LCLLIWLSLNVLLFWKTFLLY. At 38–62 the chain is on the extracellular side; sequence NQGPEYYYIHQMLGLGLCLSRASAS. The Ferric oxidoreductase domain occupies 58–303; it reads RASASVLNLN…YCAERLYRCI (246 aa). Residues 63 to 83 form a helical membrane-spanning segment; sequence VLNLNCSLILLPMCRTVLAYL. Topologically, residues 84-104 are cytoplasmic; the sequence is RGSQKVPSRRTRRLLDKSKTL. The helical transmembrane segment at 105–125 threads the bilayer; the sequence is HITCGVTICIFSGVHVAAHLV. Over 126–154 the chain is Extracellular; it reads NALNFSVNYSEDFLELNAARYQNEDPRKL. A glycan (N-linked (GlcNAc...) asparagine) is linked at asparagine 133. Residues 155 to 175 form a helical membrane-spanning segment; the sequence is LFTTIPGLTGVCMVVVLFLMV. At 176-188 the chain is on the cytoplasmic side; that stretch reads TASTYAIRVSNYD. A helical membrane pass occupies residues 189-209; the sequence is IFWYTHNLFFVFYMLLLLHVS. Residues 210 to 424 lie on the Extracellular side of the membrane; it reads GGLLKYQTNV…SPFEESLNYE (215 aa). Residues 218-273 form an E-loop; essential for H2O2 generating catalytic activity region; it reads NVDTHPPGCISLNQTSSQNMSIPDYVSEHFHGSLPRGFSKLEDRYQKTLVKICLEE. Asparagine 230 carries N-linked (GlcNAc...) asparagine glycosylation. A mediates interaction with TLR4 region spans residues 248–575; it reads HGSLPRGFSK…YGTKFEYNKE (328 aa). Residues 304–419 enclose the FAD-binding FR-type domain; sequence RSNKPVTIIS…DGPFGSPFEE (116 aa). The helical transmembrane segment at 425-445 threads the bilayer; it reads VSLCVAGGIGVTPFASILNTL. The Cytoplasmic segment spans residues 446–578; sequence LDDWKPYKLR…KFEYNKESFS (133 aa).

As to quaternary structure, interacts with, relocalizes and stabilizes CYBA/p22phox. Interacts with TLR4. Interacts with protein disulfide isomerase. Interacts with PPP1R15A. Interacts with LRRC8A; this interaction prevents the ubiquitin-mediated degradation of LRRC8A. The cofactor is heme. In terms of processing, N-glycosylation is required for the function. In terms of tissue distribution, EXpressed in brain, in all layers of the cerebellum, in pyramidal cells of the Ammon horn and in Purkinje cells (at protein level). Expressed in osteoclasts, leukocytes, kidney, liver and lung.

It localises to the cytoplasm. The protein resides in the endoplasmic reticulum membrane. Its subcellular location is the cell membrane. It is found in the cell junction. The protein localises to the focal adhesion. It localises to the nucleus. It carries out the reaction NADPH + 2 O2 = 2 superoxide + NADP(+) + H(+). The catalysed reaction is NADPH + O2 + H(+) = H2O2 + NADP(+). Activated by insulin. Inhibited by diphenylene iodonium. Inhibited by plumbagin. Activated by phorbol 12-myristate 13-acetate (PMA). Functionally, NADPH oxidase that catalyzes predominantly the reduction of oxygen to H2O2. Can also catalyze to a smaller extent, the reduction of oxygen to superoxide. May function as an oxygen sensor regulating the KCNK3/TASK-1 potassium channel and HIF1A activity. May regulate insulin signaling cascade. May play a role in apoptosis, bone resorption and lipolysaccharide-mediated activation of NFKB. May produce superoxide in the nucleus and play a role in regulating gene expression upon cell stimulation. Promotes ferroptosis, reactive oxygen species production and reduced glutathione (GSH) levels by activating NLRP3 inflammasome activation and cytokine release. The protein is NADPH oxidase 4 (Nox4) of Mus musculus (Mouse).